Consider the following 404-residue polypeptide: Cysteine desulfurase IscS (404 aa).

Pyridoxal 5'-phosphate is bound by residues 75 to 76 (AT), asparagine 155, glutamine 183, and 203 to 205 (SGH). Lysine 206 bears the N6-(pyridoxal phosphate)lysine mark. Threonine 243 contributes to the pyridoxal 5'-phosphate binding site. The active-site Cysteine persulfide intermediate is cysteine 328. Residue cysteine 328 coordinates [2Fe-2S] cluster.

It belongs to the class-V pyridoxal-phosphate-dependent aminotransferase family. NifS/IscS subfamily. In terms of assembly, homodimer. Forms a heterotetramer with IscU, interacts with other sulfur acceptors. Pyridoxal 5'-phosphate serves as cofactor.

Its subcellular location is the cytoplasm. It catalyses the reaction (sulfur carrier)-H + L-cysteine = (sulfur carrier)-SH + L-alanine. It participates in cofactor biosynthesis; iron-sulfur cluster biosynthesis. Its function is as follows. Master enzyme that delivers sulfur to a number of partners involved in Fe-S cluster assembly, tRNA modification or cofactor biosynthesis. Catalyzes the removal of elemental sulfur atoms from cysteine to produce alanine. Functions as a sulfur delivery protein for Fe-S cluster synthesis onto IscU, an Fe-S scaffold assembly protein, as well as other S acceptor proteins. In Shewanella baltica (strain OS185), this protein is Cysteine desulfurase IscS.